Here is a 738-residue protein sequence, read N- to C-terminus: Polyribonucleotide nucleotidyltransferase (738 aa).

Residues aspartate 528 and aspartate 534 each contribute to the Mg(2+) site. The KH domain occupies 594-653 (PRVVRVKIPVQKIGELIGPKGKVINSIQDETGAEISIEDDGTVYIGSSQADSSEKAVAMV). The S1 motif domain occupies 665–737 (GSQFLGTVVK…DRGKLCLVAV (73 aa)).

The protein belongs to the polyribonucleotide nucleotidyltransferase family. Requires Mg(2+) as cofactor.

Its subcellular location is the cytoplasm. It carries out the reaction RNA(n+1) + phosphate = RNA(n) + a ribonucleoside 5'-diphosphate. Involved in mRNA degradation. Catalyzes the phosphorolysis of single-stranded polyribonucleotides processively in the 3'- to 5'-direction. The chain is Polyribonucleotide nucleotidyltransferase from Tropheryma whipplei (strain Twist) (Whipple's bacillus).